A 346-amino-acid polypeptide reads, in one-letter code: N-acetyl-gamma-glutamyl-phosphate reductase (346 aa).

Residue Cys-149 is part of the active site.

Belongs to the NAGSA dehydrogenase family. Type 1 subfamily.

Its subcellular location is the cytoplasm. The enzyme catalyses N-acetyl-L-glutamate 5-semialdehyde + phosphate + NADP(+) = N-acetyl-L-glutamyl 5-phosphate + NADPH + H(+). Its pathway is amino-acid biosynthesis; L-arginine biosynthesis; N(2)-acetyl-L-ornithine from L-glutamate: step 3/4. Its function is as follows. Catalyzes the NADPH-dependent reduction of N-acetyl-5-glutamyl phosphate to yield N-acetyl-L-glutamate 5-semialdehyde. The sequence is that of N-acetyl-gamma-glutamyl-phosphate reductase from Desulfotalea psychrophila (strain LSv54 / DSM 12343).